The chain runs to 578 residues: MELENIVANSLLLKARQGGYGKKSGRSKKWKEILTLPPVSQCSELRHSIEKDYSSLCDKQPIGRRLFRQFCDTKPTLKRHIEFLDAVAEYEVADDEDRSDCGLSILDRFFNDKLAAPLPEIPPDVVTECRLGLKEENPSKKAFEECTRVAHNYLRGEPFEEYQESSYFSQFLQWKWLERQPVTKNTFRHYRVLGKGGFGEVCACQVRATGKMYACKKLQKKRIKKRKGEAMALNEKRILEKVQSRFVVSLAYAYETKDALCLVLTIMNGGDLKFHIYNLGNPGFDEQRAVFYAAELCCGLEDLQRERIVYRDLKPENILLDDRGHIRISDLGLATEIPEGQRVRGRVGTVGYMAPEVVNNEKYTFSPDWWGLGCLIYEMIQGHSPFKKYKEKVKWEEVDQRIKNDTEEYSEKFSEDAKSICRMLLTKNPSKRLGCRGEGAAGVKQHPVFKDINFRRLEANMLEPPFCPDPHAVYCKDVLDIEQFSVVKGIYLDTADEDFYARFATGCVSIPWQNEMIESGCFKDINKSESEEALPLDLDKNIHTPVSRPNRGFFYRLFRRGGCLTMVPSEKEVEPKQC.

The residue at position 1 (methionine 1) is an N-acetylmethionine. The segment at 1–154 (MELENIVANS…ECTRVAHNYL (154 aa)) is N-terminal. Residues 52–172 (DYSSLCDKQP…QESSYFSQFL (121 aa)) form the RGS domain. One can recognise a Protein kinase domain in the interval 187–449 (FRHYRVLGKG…AAGVKQHPVF (263 aa)). Residues 193 to 201 (LGKGGFGEV) and lysine 216 contribute to the ATP site. The Proton acceptor role is filled by aspartate 312. The region spanning 450–515 (KDINFRRLEA…GCVSIPWQNE (66 aa)) is the AGC-kinase C-terminal domain. Phosphoserine is present on serine 485.

It belongs to the protein kinase superfamily. AGC Ser/Thr protein kinase family. GPRK subfamily. Interacts with DRD3. Post-translationally, palmitoylated. Isoform 1, isoform 2, isoform 3, and isoform 4 are expressed in testis. Isoform 4 is expressed in myometrium.

It localises to the cytoplasm. It is found in the cell cortex. The catalysed reaction is [G-protein-coupled receptor] + ATP = [G-protein-coupled receptor]-phosphate + ADP + H(+). Inhibited by heparin. Its function is as follows. Specifically phosphorylates the activated forms of G protein-coupled receptors. GRK4-alpha can phosphorylate rhodopsin and its activity is inhibited by calmodulin; the other three isoforms do not phosphorylate rhodopsin and do not interact with calmodulin. GRK4-alpha and GRK4-gamma phosphorylate DRD3. Phosphorylates ADRB2. The polypeptide is G protein-coupled receptor kinase 4 (GRK4) (Homo sapiens (Human)).